Consider the following 729-residue polypeptide: Fatty acid oxidation complex subunit alpha (729 aa).

An enoyl-CoA hydratase/isomerase region spans residues 1 to 189 (MLYQGETLQL…KVGLVDAVVA (189 aa)). Asp-296 serves as a coordination point for substrate. Positions 311–729 (EAPKQAAVLG…LSDVSTGQPA (419 aa)) are 3-hydroxyacyl-CoA dehydrogenase. NAD(+)-binding positions include Met-324, Asp-343, 400-402 (VVE), Lys-407, and Ser-429. The active-site For 3-hydroxyacyl-CoA dehydrogenase activity is the His-450. Asn-453 contacts NAD(+). 2 residues coordinate substrate: Asn-500 and Tyr-660.

It in the N-terminal section; belongs to the enoyl-CoA hydratase/isomerase family. The protein in the C-terminal section; belongs to the 3-hydroxyacyl-CoA dehydrogenase family. In terms of assembly, heterotetramer of two alpha chains (FadB) and two beta chains (FadA).

It catalyses the reaction a (3S)-3-hydroxyacyl-CoA + NAD(+) = a 3-oxoacyl-CoA + NADH + H(+). It carries out the reaction a (3S)-3-hydroxyacyl-CoA = a (2E)-enoyl-CoA + H2O. The catalysed reaction is a 4-saturated-(3S)-3-hydroxyacyl-CoA = a (3E)-enoyl-CoA + H2O. The enzyme catalyses (3S)-3-hydroxybutanoyl-CoA = (3R)-3-hydroxybutanoyl-CoA. It catalyses the reaction a (3Z)-enoyl-CoA = a 4-saturated (2E)-enoyl-CoA. It carries out the reaction a (3E)-enoyl-CoA = a 4-saturated (2E)-enoyl-CoA. It participates in lipid metabolism; fatty acid beta-oxidation. Functionally, involved in the aerobic and anaerobic degradation of long-chain fatty acids via beta-oxidation cycle. Catalyzes the formation of 3-oxoacyl-CoA from enoyl-CoA via L-3-hydroxyacyl-CoA. It can also use D-3-hydroxyacyl-CoA and cis-3-enoyl-CoA as substrate. The protein is Fatty acid oxidation complex subunit alpha of Serratia proteamaculans (strain 568).